Here is a 426-residue protein sequence, read N- to C-terminus: Histidine--tRNA ligase (426 aa).

This sequence belongs to the class-II aminoacyl-tRNA synthetase family. As to quaternary structure, homodimer.

The protein resides in the cytoplasm. The catalysed reaction is tRNA(His) + L-histidine + ATP = L-histidyl-tRNA(His) + AMP + diphosphate + H(+). This chain is Histidine--tRNA ligase, found in Lactiplantibacillus plantarum (strain ATCC BAA-793 / NCIMB 8826 / WCFS1) (Lactobacillus plantarum).